Consider the following 309-residue polypeptide: Homoserine O-succinyltransferase (309 aa).

Cys142 serves as the catalytic Acyl-thioester intermediate. Substrate contacts are provided by Lys163 and Ser192. The Proton acceptor role is filled by His235. Glu237 is a catalytic residue. Arg249 lines the substrate pocket.

This sequence belongs to the MetA family.

The protein localises to the cytoplasm. It carries out the reaction L-homoserine + succinyl-CoA = O-succinyl-L-homoserine + CoA. It functions in the pathway amino-acid biosynthesis; L-methionine biosynthesis via de novo pathway; O-succinyl-L-homoserine from L-homoserine: step 1/1. In terms of biological role, transfers a succinyl group from succinyl-CoA to L-homoserine, forming succinyl-L-homoserine. The chain is Homoserine O-succinyltransferase from Pectobacterium carotovorum subsp. carotovorum (strain PC1).